Here is a 171-residue protein sequence, read N- to C-terminus: ATP synthase subunit b (171 aa).

Residues 12 to 34 (FGLNLNLFETNVINLAVVIFGLY) traverse the membrane as a helical segment.

Belongs to the ATPase B chain family. F-type ATPases have 2 components, F(1) - the catalytic core - and F(0) - the membrane proton channel. F(1) has five subunits: alpha(3), beta(3), gamma(1), delta(1), epsilon(1). F(0) has four main subunits: a(1), b(1), b'(1) and c(10-14). The alpha and beta chains form an alternating ring which encloses part of the gamma chain. F(1) is attached to F(0) by a central stalk formed by the gamma and epsilon chains, while a peripheral stalk is formed by the delta, b and b' chains.

It is found in the cellular thylakoid membrane. F(1)F(0) ATP synthase produces ATP from ADP in the presence of a proton or sodium gradient. F-type ATPases consist of two structural domains, F(1) containing the extramembraneous catalytic core and F(0) containing the membrane proton channel, linked together by a central stalk and a peripheral stalk. During catalysis, ATP synthesis in the catalytic domain of F(1) is coupled via a rotary mechanism of the central stalk subunits to proton translocation. Its function is as follows. Component of the F(0) channel, it forms part of the peripheral stalk, linking F(1) to F(0). This chain is ATP synthase subunit b, found in Prochlorococcus marinus (strain MIT 9211).